The primary structure comprises 449 residues: Putative recombination initiation defects 3 (449 aa).

The interval 21–56 (LRRSAEPQASQQLRSQQSQQSFSQGPSSSQRGCGGF) is disordered. A compositionally biased stretch (low complexity) spans 28 to 50 (QASQQLRSQQSQQSFSQGPSSSQ). Positions 437-441 (RTKRK) match the Nuclear localization signal motif.

Interacts with PRD1; this interaction facilitates a binding to DFO.

The protein localises to the nucleus. Its function is as follows. Involved in DNA cleavage that forms the double-strand breaks (DSB) that initiate meiotic recombination. The protein is Putative recombination initiation defects 3 of Arabidopsis thaliana (Mouse-ear cress).